We begin with the raw amino-acid sequence, 126 residues long: Aspartate 1-decarboxylase (126 aa).

Ser25 functions as the Schiff-base intermediate with substrate; via pyruvic acid in the catalytic mechanism. Ser25 is subject to Pyruvic acid (Ser). Thr57 contributes to the substrate binding site. The active-site Proton donor is the Tyr58. Position 73-75 (Gly73–Ala75) interacts with substrate.

Belongs to the PanD family. As to quaternary structure, heterooctamer of four alpha and four beta subunits. Requires pyruvate as cofactor. Post-translationally, is synthesized initially as an inactive proenzyme, which is activated by self-cleavage at a specific serine bond to produce a beta-subunit with a hydroxyl group at its C-terminus and an alpha-subunit with a pyruvoyl group at its N-terminus.

The protein resides in the cytoplasm. It catalyses the reaction L-aspartate + H(+) = beta-alanine + CO2. It functions in the pathway cofactor biosynthesis; (R)-pantothenate biosynthesis; beta-alanine from L-aspartate: step 1/1. Catalyzes the pyruvoyl-dependent decarboxylation of aspartate to produce beta-alanine. In Alkalilimnicola ehrlichii (strain ATCC BAA-1101 / DSM 17681 / MLHE-1), this protein is Aspartate 1-decarboxylase.